Consider the following 321-residue polypeptide: Putative membrane-bound redox modulator Alx (321 aa).

The Periplasmic portion of the chain corresponds to 1 to 6 (MNTVGT). The chain crosses the membrane as a helical span at residues 7-27 (PLLWGGFAVVVTIMLAIDLLL). Residues 28–43 (QGRRGAHAMTMKQAAA) lie on the Cytoplasmic side of the membrane. Residues 44-64 (WSLVWVTLSLLFNAAFWWYLV) form a helical membrane-spanning segment. Over 65-89 (QTEGRAVADPQALAFLTGYLIEKSL) the chain is Periplasmic. Residues 90–110 (AVDNVFVWLMLFSYFSVPAAL) traverse the membrane as a helical segment. Residues 111–113 (QRR) lie on the Cytoplasmic side of the membrane. Residues 114-134 (VLVYGVLGAIVLRTIMIFTGS) form a helical membrane-spanning segment. Position 135 (W135) is a topological domain, periplasmic. Residues 136 to 156 (LISQFDWILYIFGAFLLFTGV) form a helical membrane-spanning segment. The Cytoplasmic segment spans residues 157–198 (KMALAHEDESGIGDKPLVRWLRGHLRMTDTIDNEHFFVRKNG). Residues 199–219 (LLYATPLMLVLILVELSDVIF) traverse the membrane as a helical segment. Topologically, residues 220 to 225 (AVDSIP) are periplasmic. A helical transmembrane segment spans residues 226–246 (AIFAVTTDPFIVLTSNLFAIL). Residues 247 to 261 (GLRAMYFLLAGVAER) are Cytoplasmic-facing. The chain crosses the membrane as a helical span at residues 262–282 (FSMLKYGLAVILVFIGIKMLI). Residues 283-286 (VDFY) lie on the Periplasmic side of the membrane. A helical membrane pass occupies residues 287–307 (HIPIAVSLGVVFGILVMTFII). Over 308-321 (NAWVNYRHDKQRVE) the chain is Cytoplasmic.

It belongs to the TerC family.

The protein resides in the cell inner membrane. Functionally, has been proposed to be a redox modulator. This chain is Putative membrane-bound redox modulator Alx (alx), found in Escherichia coli O6:H1 (strain CFT073 / ATCC 700928 / UPEC).